Consider the following 125-residue polypeptide: Translation initiation factor 5A (125 aa).

Position 36 is a hypusine (lysine 36).

Belongs to the eIF-5A family.

The protein localises to the cytoplasm. Functionally, functions by promoting the formation of the first peptide bond. The protein is Translation initiation factor 5A (eIF5A) of Halorubrum lacusprofundi (strain ATCC 49239 / DSM 5036 / JCM 8891 / ACAM 34).